The following is a 602-amino-acid chain: MGCGLNKLEKHDEKRPGNIYSTLKRPQVETKIDVSYEYRFLDFTTLNDAELPGSSAIKLSSLRDLPAQLQELYQQGFVLAAVHPFVQPTDEKEKTPQEQIFRAVLIKKTERSPKGGIHSEGYILEVECCSSVNQLSDKKEIPDFIKKIQDAASQGLKFVGIIPQYHSQKNCLVSSSLTPASNNSVQSRDNKNVSNCPEDHASLDGEKIDGINGCSTPAPGEENADQCATSREGRKGEGQAAEEPDCKSAKGSKEQHEHPGGREAPDTQNGVAENETPARCSKPLTDKTEIFTLFNKPKTPQRCSQYYTVTIPMRISRNGQTVNSLEANWLEHMTDHFRKGGSLVNAIFSLGMVNDSLHGTMDGVFLFEDVAVEDNKTTQGYDAIVVEQWTVLKGVEVQTDYVPLLNSLAIYGWQLTCVLPTPIVKTNREGNLSTKQIVFLQRPSLPQKAKKKESKFHWRFSKEDMHNKPMKKSRKTKLSSGEKQTAEKQEFEVTENTRNLAAQLSAASGPGPEQQLDSVINLGNETAGADSRGTLHDGVSEGTCPASADAGDTGGSEVQACPNQSAPNCCEEQEAAGQDCALGPDSCQGIDGAAADVEPSCE.

The N-myristoyl glycine moiety is linked to residue Gly-2. A lipid anchor (S-palmitoyl cysteine) is attached at Cys-3. The segment covering Thr-178–Asn-195 has biased composition (polar residues). Disordered stretches follow at residues Thr-178–Lys-282, Lys-451–Glu-495, and Asn-524–Pro-567. Composition is skewed to basic and acidic residues over residues Pro-197 to Asp-209 and Pro-244 to Pro-265. The span at Lys-468–Lys-477 shows a compositional bias: basic residues.

This sequence belongs to the raftlin family.

It is found in the cell membrane. May play a pivotal role in the formation and/or maintenance of lipid rafts. May regulate B-cell antigen receptor-mediated signaling. This chain is Raftlin (RFTN1), found in Gallus gallus (Chicken).